A 228-amino-acid chain; its full sequence is Octanoyltransferase (228 aa).

The BPL/LPL catalytic domain occupies 30–214 (KKIGDTLLLL…YFGKVFGKSL (185 aa)). Substrate contacts are provided by residues 75–82 (RGGDVTYH), 144–146 (AIG), and 157–159 (GFA). Cysteine 175 functions as the Acyl-thioester intermediate in the catalytic mechanism.

The protein belongs to the LipB family.

The protein localises to the cytoplasm. The catalysed reaction is octanoyl-[ACP] + L-lysyl-[protein] = N(6)-octanoyl-L-lysyl-[protein] + holo-[ACP] + H(+). The protein operates within protein modification; protein lipoylation via endogenous pathway; protein N(6)-(lipoyl)lysine from octanoyl-[acyl-carrier-protein]: step 1/2. Functionally, catalyzes the transfer of endogenously produced octanoic acid from octanoyl-acyl-carrier-protein onto the lipoyl domains of lipoate-dependent enzymes. Lipoyl-ACP can also act as a substrate although octanoyl-ACP is likely to be the physiological substrate. This is Octanoyltransferase from Caldicellulosiruptor bescii (strain ATCC BAA-1888 / DSM 6725 / KCTC 15123 / Z-1320) (Anaerocellum thermophilum).